A 453-amino-acid polypeptide reads, in one-letter code: Omega-3 fatty acid desaturase, chloroplastic (453 aa).

Positions 171–175 match the Histidine box-1 motif; it reads HDCGH. A Histidine box-2 motif is present at residues 207-211; the sequence is HRTHH. Positions 374-378 match the Histidine box-3 motif; sequence HVIHH.

This sequence belongs to the fatty acid desaturase type 1 family.

The protein resides in the plastid. It is found in the chloroplast membrane. It participates in lipid metabolism; polyunsaturated fatty acid biosynthesis. In terms of biological role, chloroplast omega-3 fatty acid desaturase introduces the third double bond in the biosynthesis of 16:3 and 18:3 fatty acids, important constituents of plant membranes. It is thought to use ferredoxin as an electron donor and to act on fatty acids esterified to galactolipids, sulfolipids and phosphatidylglycerol. This Glycine max (Soybean) protein is Omega-3 fatty acid desaturase, chloroplastic (FAD7).